Reading from the N-terminus, the 218-residue chain is Putative glutamine transport system permease protein GlnP (218 aa).

The region spanning 19–208 is the ABC transmembrane type-1 domain; that stretch reads TLITLKYSVI…ILVMLISFIA (190 aa). 4 helical membrane-spanning segments follow: residues 25-45, 57-79, 86-108, and 187-207; these read YSVIAVIFGLVIGVLLALCKV, FYTSIFRGTPLLIQLSIIYFASP, FTVFMAGAISFSLNSGAYVSEVI, and FFPMIVAACCYYILVMLISFI.

Belongs to the binding-protein-dependent transport system permease family. HisMQ subfamily.

The protein resides in the cell inner membrane. In terms of biological role, part of the binding-protein-dependent transport system for glutamine; probably responsible for the translocation of the substrate across the membrane. This Rickettsia bellii (strain RML369-C) protein is Putative glutamine transport system permease protein GlnP (glnP).